The following is a 747-amino-acid chain: METAEKECGALGGLFQAIVNDMKSSYPIWEDFNSKATKLHSQLRTTVLAAVAFLDAFQKVADMATNTRGATRDIGSALTRMCMRHRSIETKLRQFTNALLESLINPLQERIEDWKKAANQLDKDHAKEYKRARHEIKKKSSDTLKLQKKARKELLGKGDLQPQLDSALQDVNDMYLLLEETEKQAVRRALIEERGRFCTFITFLQPVVNGELTMLGEITHLQGIIDDLVVLTAEPHKLPPASEQVIKDLKGSDYSWSYQTPPSSPSSSSSRKSSMCSAPSSSSSAKGGGAPWPGGAQTYSPSSTCRYRSLAQPATTTARLSSVSSHDSGFVSQDATYSKPPSPMPSDITSQKSSSSASSEASETCQSVSECSSPTSDWSKVGSHEQPSGATLQRRKDRVELLRDTEPGPASGGTLGPSGEEAPRPRMSPATIAAKHGEEVSPAASDLAMVLTRGLSLEHQKSSRDSLQYSSGYSTQTTTPSCSEDTIPSQGSDYDCYSVNGDADSEGPPEFDKSSTIPRNSNIAQNYRRLIQTKRPASTAGLPTAGLPTATGLPSGAPPGVATIRRTPSTKPTVRRALSSAGPIPIRPPIVPVKTPTVPDSPGYMGPTRAGSEECVFYTDETASPLAPDLAKASPKRLSLPNTAWGSPSPEAAGYPGAGAEDEQQQLAANRHSLVEKLGELVAGAHALGEGQFPFPTALSATPTEETPTPPPAATSDPPAEDMLVAIRRGVRLRRTVTNDRSAPRIL.

One can recognise an IMD domain in the interval 1-252 (METAEKECGA…EQVIKDLKGS (252 aa)). A coiled-coil region spans residues 135-159 (EIKKKSSDTLKLQKKARKELLGKGD). Low complexity-rich tracts occupy residues 256–284 (WSYQ…SSSS), 321–332 (SSVSSHDSGFVS), and 349–367 (TSQK…TCQS). 4 disordered regions span residues 256–302 (WSYQ…YSPS), 318–441 (ARLS…EEVS), 457–522 (LEHQ…RNSN), and 543–599 (PTAG…PTVP). Threonine 260 bears the Phosphothreonine mark. Serine 264 carries the post-translational modification Phosphoserine. Residues 368-378 (VSECSSPTSDW) are compositionally biased toward polar residues. A compositionally biased stretch (basic and acidic residues) spans 397–406 (DRVELLRDTE). Serine 441 carries the post-translational modification Phosphoserine. The span at 466–479 (SLQYSSGYSTQTTT) shows a compositional bias: low complexity. Polar residues predominate over residues 480-492 (PSCSEDTIPSQGS). Phosphoserine occurs at positions 579, 601, 612, 624, 634, and 639. 2 disordered regions span residues 638-664 (LSLP…EDEQ) and 691-720 (GQFP…DPPA). At threonine 643 the chain carries Phosphothreonine. Composition is skewed to low complexity over residues 646 to 659 (GSPS…PGAG) and 696 to 707 (PTALSATPTEET). One can recognise a WH2 domain in the interval 719-736 (PAEDMLVAIRRGVRLRRT).

Belongs to the MTSS family. As to quaternary structure, interacts (via IMD domain) with RAC1; this interaction may be important to potentiate PDGF-induced RAC1 activation.

Its subcellular location is the cytoplasm. It is found in the cell projection. The protein localises to the ruffle. Involved in plasma membrane dynamics. Potentiated PDGF-mediated formation of membrane ruffles and lamellipodia in fibroblasts, acting via RAC1 activation. May function in actin bundling. This is Protein MTSS 2 from Homo sapiens (Human).